The following is an 89-amino-acid chain: Small ribosomal subunit protein uS15 (89 aa).

Residues 1 to 24 form a disordered region; that stretch reads MALTQTKKQELISQYQAHETDTGS.

The protein belongs to the universal ribosomal protein uS15 family. In terms of assembly, part of the 30S ribosomal subunit. Forms a bridge to the 50S subunit in the 70S ribosome, contacting the 23S rRNA.

Its function is as follows. One of the primary rRNA binding proteins, it binds directly to 16S rRNA where it helps nucleate assembly of the platform of the 30S subunit by binding and bridging several RNA helices of the 16S rRNA. In terms of biological role, forms an intersubunit bridge (bridge B4) with the 23S rRNA of the 50S subunit in the ribosome. The protein is Small ribosomal subunit protein uS15 of Microcystis aeruginosa (strain NIES-843 / IAM M-2473).